Here is a 399-residue protein sequence, read N- to C-terminus: Telomeric repeat-binding factor 2-interacting protein 1 (399 aa).

The interval 1–21 is disordered; sequence MAEAMELGKDPNGPTHSSTLF. The residue at position 2 (Ala-2) is an N-acetylalanine. In terms of domain architecture, BRCT spans 10–101; sequence DPNGPTHSST…EKLELEAYRL (92 aa). Phosphoserine occurs at positions 36 and 43. Residue Lys-114 forms a Glycyl lysine isopeptide (Lys-Gly) (interchain with G-Cter in SUMO2) linkage. One can recognise a Myb-like domain in the interval 130–190; the sequence is QSQAGRMVFT…SMKDRYLKRL (61 aa). 2 positions are modified to phosphoserine: Ser-156 and Ser-158. A Glycyl lysine isopeptide (Lys-Gly) (interchain with G-Cter in SUMO2) cross-link involves residue Lys-196. Disordered regions lie at residues 199–245 and 279–309; these read LGEA…KEEI and TMCD…VSAP. 2 positions are modified to phosphoserine: Ser-205 and Ser-208. Residues Lys-210, Lys-214, and Lys-242 each participate in a glycyl lysine isopeptide (Lys-Gly) (interchain with G-Cter in SUMO2) cross-link. Over residues 281-304 the composition is skewed to acidic residues; it reads CDDDPCTPEEDSETQPDEEEEEEE. Lys-372 is covalently cross-linked (Glycyl lysine isopeptide (Lys-Gly) (interchain with G-Cter in SUMO2)). Residues 383–399 carry the Nuclear localization signal motif; the sequence is KKFGAQNVARRIEFRKK.

The protein belongs to the RAP1 family. In terms of assembly, associates with the I-kappa-B-kinase (IKK) core complex, composed of CHUK, IKBKB and IKBKG. Homodimer. Component of the shelterin complex (telosome) composed of TERF1, TERF2, TINF2, TERF2IP ACD and POT1. Interacts with TERF2 (but not TERF1) with its C-terminus. Interacts with SLX4/BTBD12. Interacts with TERF2; the interaction is direct.

It is found in the nucleus. It localises to the cytoplasm. The protein resides in the chromosome. The protein localises to the telomere. In terms of biological role, acts both as a regulator of telomere function and as a transcription regulator. Involved in the regulation of telomere length and protection as a component of the shelterin complex (telosome). In contrast to other components of the shelterin complex, it is dispensible for telomere capping and does not participate in the protection of telomeres against non-homologous end-joining (NHEJ)-mediated repair. Instead, it is required to negatively regulate telomere recombination and is essential for repressing homology-directed repair (HDR), which can affect telomere length. Does not bind DNA directly: recruited to telomeric double-stranded 5'-TTAGGG-3' repeats via its interaction with TERF2. Independently of its function in telomeres, also acts as a transcription regulator: recruited to extratelomeric 5'-TTAGGG-3' sites via its association with TERF2 or other factors, and regulates gene expression. When cytoplasmic, associates with the I-kappa-B-kinase (IKK) complex and acts as a regulator of the NF-kappa-B signaling by promoting IKK-mediated phosphorylation of RELA/p65, leading to activate expression of NF-kappa-B target genes. The sequence is that of Telomeric repeat-binding factor 2-interacting protein 1 (TERF2IP) from Bos taurus (Bovine).